Consider the following 647-residue polypeptide: Acetyl-coenzyme A synthetase (647 aa).

CoA contacts are provided by residues 190–193 and T310; that span reads RGGR. ATP is bound by residues 386–388, 410–415, D499, and R514; these read GEP and DTWWQT. CoA is bound at residue S522. R525 contacts ATP. V536, H538, and V541 together coordinate Mg(2+). A CoA-binding site is contributed by R583. Position 608 is an N6-acetyllysine (K608).

The protein belongs to the ATP-dependent AMP-binding enzyme family. Requires Mg(2+) as cofactor. Post-translationally, acetylated. Deacetylation by the SIR2-homolog deacetylase activates the enzyme.

The enzyme catalyses acetate + ATP + CoA = acetyl-CoA + AMP + diphosphate. Its function is as follows. Catalyzes the conversion of acetate into acetyl-CoA (AcCoA), an essential intermediate at the junction of anabolic and catabolic pathways. AcsA undergoes a two-step reaction. In the first half reaction, AcsA combines acetate with ATP to form acetyl-adenylate (AcAMP) intermediate. In the second half reaction, it can then transfer the acetyl group from AcAMP to the sulfhydryl group of CoA, forming the product AcCoA. The protein is Acetyl-coenzyme A synthetase of Xylella fastidiosa (strain Temecula1 / ATCC 700964).